Here is a 252-residue protein sequence, read N- to C-terminus: Trans-aconitate 2-methyltransferase (252 aa).

The protein belongs to the methyltransferase superfamily. Tam family.

Its subcellular location is the cytoplasm. It carries out the reaction trans-aconitate + S-adenosyl-L-methionine = (E)-3-(methoxycarbonyl)pent-2-enedioate + S-adenosyl-L-homocysteine. Catalyzes the S-adenosylmethionine monomethyl esterification of trans-aconitate. The sequence is that of Trans-aconitate 2-methyltransferase from Escherichia coli O6:K15:H31 (strain 536 / UPEC).